Reading from the N-terminus, the 531-residue chain is Zinc finger protein 703-B (531 aa).

The span at 1-10 (MNCSPPGSCT) shows a compositional bias: polar residues. Disordered stretches follow at residues 1–28 (MNCS…ATLA), 88–249 (SQIG…VAPI), and 295–318 (VGNQ…LTGA). 2 stretches are compositionally biased toward low complexity: residues 19–28 (TPATPCATLA) and 113–122 (RSSSLKLGES). Residues 171-180 (SPSSRVSSPG) are compositionally biased toward polar residues. Over residues 183 to 198 (CESKNNESQEKKEPEV) the composition is skewed to basic and acidic residues. The segment covering 199–215 (NKSSLETSQANPTLTRA) has biased composition (polar residues). Positions 216-227 (SISNSSAESSQS) are enriched in low complexity. A C2H2-type zinc finger spans residues 404-432 (HICNWVSASGPCDKRFATSEELLAHLRTH).

Belongs to the Elbow/Noc family.

It localises to the nucleus. The protein localises to the cytoplasm. Its function is as follows. Transcriptional corepressor which does not bind directly to DNA and may regulate transcription through recruitment of histone deacetylases to gene promoters. Regulates cell adhesion, migration and proliferation. Involved in specification of the lateral neural plate border (NPB). May be required for segmental gene expression during hindbrain development. This chain is Zinc finger protein 703-B (znf703-b), found in Xenopus laevis (African clawed frog).